Reading from the N-terminus, the 196-residue chain is SPRY domain-containing protein 7 (196 aa).

An N-acetylalanine modification is found at alanine 2. The B30.2/SPRY domain maps to 2–184 (AASAWCCLRC…FSEFYHTPPP (183 aa)).

This is SPRY domain-containing protein 7 (Spryd7) from Mus musculus (Mouse).